We begin with the raw amino-acid sequence, 486 residues long: Putative protease Do-like 13 (486 aa).

The interval 44–229 is serine protease; the sequence is KINTFSSKPN…IPAPVVKHFI (186 aa). Active-site charge relay system residues include histidine 83, aspartate 114, and serine 192. Residues 241–334 enclose the PDZ domain; the sequence is FCSLNLSYQH…TILLKILREG (94 aa).

The protein belongs to the peptidase S1C family.

Putative serine protease. The polypeptide is Putative protease Do-like 13 (DEGP13) (Arabidopsis thaliana (Mouse-ear cress)).